The chain runs to 264 residues: MQQYLDLCKHILNNGIKKEDRTGTGTISTFGYQMRFDLQKGFPLLTTKKLHLKSIIHELLWFISGNTNIKYLKDNGVSIWDEWADENGNLGPVYGHQWRSWDTADGRSIDQLKGVIDQIKNNPDSRRLIVSSWNVGEIEKMALPPCHCFYQFYVVNGTLSCMLYQRSADVFIGVPFNIASYALFTMMIAQSCGLRAGEFVHTLGDAHIYLNHVEQVKLQLSRDPRPLPKMNINPDIKDLFQFKYSDFTLTDYDPHPHIKGAVAV.

Residue Arg21 participates in dUMP binding. His51 provides a ligand contact to (6R)-5,10-methylene-5,6,7,8-tetrahydrofolate. 126–127 (RR) contacts dUMP. Catalysis depends on Cys146, which acts as the Nucleophile. DUMP is bound by residues 166–169 (RSAD), Asn177, and 207–209 (HIY). Asp169 is a binding site for (6R)-5,10-methylene-5,6,7,8-tetrahydrofolate. (6R)-5,10-methylene-5,6,7,8-tetrahydrofolate is bound at residue Ala263.

The protein belongs to the thymidylate synthase family. Bacterial-type ThyA subfamily. As to quaternary structure, homodimer.

It localises to the cytoplasm. The enzyme catalyses dUMP + (6R)-5,10-methylene-5,6,7,8-tetrahydrofolate = 7,8-dihydrofolate + dTMP. The protein operates within pyrimidine metabolism; dTTP biosynthesis. Catalyzes the reductive methylation of 2'-deoxyuridine-5'-monophosphate (dUMP) to 2'-deoxythymidine-5'-monophosphate (dTMP) while utilizing 5,10-methylenetetrahydrofolate (mTHF) as the methyl donor and reductant in the reaction, yielding dihydrofolate (DHF) as a by-product. This enzymatic reaction provides an intracellular de novo source of dTMP, an essential precursor for DNA biosynthesis. This is Thymidylate synthase from Ruminiclostridium cellulolyticum (strain ATCC 35319 / DSM 5812 / JCM 6584 / H10) (Clostridium cellulolyticum).